The following is a 529-amino-acid chain: Zinc finger protein 572 (529 aa).

The interval 1 to 62 (MEQEKKLLVS…EWSKRHRPQH (62 aa)) is disordered. Glycyl lysine isopeptide (Lys-Gly) (interchain with G-Cter in SUMO2) cross-links involve residues K5 and K6. Positions 26 to 35 (TGDTSMNNLE) are enriched in polar residues. Residues 36-55 (TVHHNNSKADKLKEKPSEWS) show a composition bias toward basic and acidic residues. 12 consecutive C2H2-type zinc fingers follow at residues 132–154 (YKCS…QRTH), 160–182 (YKCS…LRMH), 188–210 (YQCG…ERTH), 216–238 (YKCP…HRSH), 244–266 (YECS…QRTH), 272–294 (YKCP…QRTH), 300–322 (YKCL…QRIH), 328–350 (YQCP…QKMH), 384–406 (YRCC…QRTH), 412–434 (YRCS…QRTH), 440–462 (YKCP…RRTH), and 468–490 (YKCT…RKIH).

It belongs to the krueppel C2H2-type zinc-finger protein family.

It is found in the nucleus. In terms of biological role, may be involved in transcriptional regulation. The protein is Zinc finger protein 572 (ZNF572) of Homo sapiens (Human).